The sequence spans 179 residues: Large ribosomal subunit protein uL10 (179 aa).

The protein belongs to the universal ribosomal protein uL10 family. In terms of assembly, part of the ribosomal stalk of the 50S ribosomal subunit. The N-terminus interacts with L11 and the large rRNA to form the base of the stalk. The C-terminus forms an elongated spine to which L12 dimers bind in a sequential fashion forming a multimeric L10(L12)X complex.

Its function is as follows. Forms part of the ribosomal stalk, playing a central role in the interaction of the ribosome with GTP-bound translation factors. The sequence is that of Large ribosomal subunit protein uL10 from Polynucleobacter necessarius subsp. necessarius (strain STIR1).